Here is a 343-residue protein sequence, read N- to C-terminus: Phosphate acyltransferase (343 aa).

Belongs to the PlsX family. In terms of assembly, homodimer. Probably interacts with PlsY.

The protein localises to the cytoplasm. It catalyses the reaction a fatty acyl-[ACP] + phosphate = an acyl phosphate + holo-[ACP]. The protein operates within lipid metabolism; phospholipid metabolism. Catalyzes the reversible formation of acyl-phosphate (acyl-PO(4)) from acyl-[acyl-carrier-protein] (acyl-ACP). This enzyme utilizes acyl-ACP as fatty acyl donor, but not acyl-CoA. The sequence is that of Phosphate acyltransferase from Coxiella burnetii (strain CbuG_Q212) (Coxiella burnetii (strain Q212)).